The sequence spans 417 residues: Tryptophan synthase beta chain (417 aa).

The residue at position 110 (K110) is an N6-(pyridoxal phosphate)lysine.

This sequence belongs to the TrpB family. As to quaternary structure, tetramer of two alpha and two beta chains. Pyridoxal 5'-phosphate serves as cofactor.

It carries out the reaction (1S,2R)-1-C-(indol-3-yl)glycerol 3-phosphate + L-serine = D-glyceraldehyde 3-phosphate + L-tryptophan + H2O. It participates in amino-acid biosynthesis; L-tryptophan biosynthesis; L-tryptophan from chorismate: step 5/5. Functionally, the beta subunit is responsible for the synthesis of L-tryptophan from indole and L-serine. This is Tryptophan synthase beta chain from Prochlorococcus marinus (strain NATL1A).